Here is a 168-residue protein sequence, read N- to C-terminus: G/U mismatch-specific DNA glycosylase (168 aa).

It belongs to the uracil-DNA glycosylase (UDG) superfamily. TDG/mug family. As to quaternary structure, binds DNA as a monomer.

The protein localises to the cytoplasm. It carries out the reaction Specifically hydrolyzes mismatched double-stranded DNA and polynucleotides, releasing free uracil.. Excises ethenocytosine and uracil, which can arise by alkylation or deamination of cytosine, respectively, from the corresponding mispairs with guanine in ds-DNA. It is capable of hydrolyzing the carbon-nitrogen bond between the sugar-phosphate backbone of the DNA and the mispaired base. The complementary strand guanine functions in substrate recognition. Required for DNA damage lesion repair in stationary-phase cells. The polypeptide is G/U mismatch-specific DNA glycosylase (Enterobacter sp. (strain 638)).